The following is a 237-amino-acid chain: Carboxy-S-adenosyl-L-methionine synthase (237 aa).

S-adenosyl-L-methionine-binding positions include Y36, G61–S63, D86–N87, D112–I113, N127, and R194.

The protein belongs to the class I-like SAM-binding methyltransferase superfamily. Cx-SAM synthase family. In terms of assembly, homodimer.

It carries out the reaction prephenate + S-adenosyl-L-methionine = carboxy-S-adenosyl-L-methionine + 3-phenylpyruvate + H2O. Functionally, catalyzes the conversion of S-adenosyl-L-methionine (SAM) to carboxy-S-adenosyl-L-methionine (Cx-SAM). The sequence is that of Carboxy-S-adenosyl-L-methionine synthase from Ruthia magnifica subsp. Calyptogena magnifica.